Here is a 274-residue protein sequence, read N- to C-terminus: Ethanolamine ammonia-lyase small subunit (274 aa).

Adenosylcob(III)alamin-binding residues include valine 161, glutamate 182, and cysteine 211.

It belongs to the EutC family. The basic unit is a heterodimer which dimerizes to form tetramers. The heterotetramers trimerize; 6 large subunits form a core ring with 6 small subunits projecting outwards. It depends on adenosylcob(III)alamin as a cofactor.

The protein resides in the bacterial microcompartment. The catalysed reaction is ethanolamine = acetaldehyde + NH4(+). It participates in amine and polyamine degradation; ethanolamine degradation. Catalyzes the deamination of various vicinal amino-alcohols to oxo compounds. Allows this organism to utilize ethanolamine as the sole source of nitrogen and carbon in the presence of external vitamin B12. The polypeptide is Ethanolamine ammonia-lyase small subunit (Pseudomonas fluorescens (strain ATCC BAA-477 / NRRL B-23932 / Pf-5)).